Reading from the N-terminus, the 479-residue chain is MNIETLFPLDPNVKVRTRFAPSPTGYLHVGGARTALYSWLYAKHFNGEFVLRIEDTDLERSTPEATAAILEGMEWLNLTWEHGPYFQTKRFDRYNQVIDQMIEQGLAYRCYCSKDRLEQLRNEQEASKEKPRYDRHCLNHQDRSINEPHVVRFKNPQQGSVVFDDAVRGRIEISNSELDDLIIRRTDGSPTYNFCVVVDDWDMGITHVVRGEDHINNTPRQINILKALGAPIPTYAHVSMINGDDGQKLSKRHGAVSVMQYRDDGYLPEALINYLVRLGWGHGDQEIFSREEMIELFDLHSVSRSASAFNTEKLQWLNQHYMRTLPAEYVAKYLEWHMHDQAIDIANGPTLTELIPVLSERAKTLKELATASRYFYQEFDAYDEKAVAKTFKLEAEQPLTMLWEKLTALVDWNVENIHQAMNATATELGIGMGKVGMPFRLAVTGSAQSPSMDITAKLVGRERTLARLQKAIKFIQAQS.

The 'HIGH' region signature appears at Pro21–Gly31. The 'KMSKS' region signature appears at Lys248–Arg252. Lys251 contacts ATP.

It belongs to the class-I aminoacyl-tRNA synthetase family. Glutamate--tRNA ligase type 1 subfamily. Monomer.

It is found in the cytoplasm. It carries out the reaction tRNA(Glu) + L-glutamate + ATP = L-glutamyl-tRNA(Glu) + AMP + diphosphate. Catalyzes the attachment of glutamate to tRNA(Glu) in a two-step reaction: glutamate is first activated by ATP to form Glu-AMP and then transferred to the acceptor end of tRNA(Glu). In Haemophilus ducreyi (strain 35000HP / ATCC 700724), this protein is Glutamate--tRNA ligase.